A 690-amino-acid polypeptide reads, in one-letter code: Polyribonucleotide nucleotidyltransferase (690 aa).

Aspartate 482 and aspartate 488 together coordinate Mg(2+). The KH domain occupies 549–608 (PRIITIQINPDRIRDVIGPGGKVIRALTEETGATIDIQDNGTVTIASVDGEAGAAAKRRI). Residues 618 to 686 (DTIYDGKVAK…RQGKIKLSMK (69 aa)) enclose the S1 motif domain.

The protein belongs to the polyribonucleotide nucleotidyltransferase family. Component of the RNA degradosome, which is a multiprotein complex involved in RNA processing and mRNA degradation. Mg(2+) serves as cofactor.

Its subcellular location is the cytoplasm. The catalysed reaction is RNA(n+1) + phosphate = RNA(n) + a ribonucleoside 5'-diphosphate. Functionally, involved in mRNA degradation. Catalyzes the phosphorolysis of single-stranded polyribonucleotides processively in the 3'- to 5'-direction. In Acidithiobacillus ferrooxidans (strain ATCC 23270 / DSM 14882 / CIP 104768 / NCIMB 8455) (Ferrobacillus ferrooxidans (strain ATCC 23270)), this protein is Polyribonucleotide nucleotidyltransferase.